Consider the following 591-residue polypeptide: uncharacterized protein (591 aa).

Transmembrane regions (helical) follow at residues 389 to 409 (VYLGSYFAGASGLVIAGSALI), 411 to 431 (GGSPWFGLGLAGVGILAGGIL), 538 to 558 (GILPEWALWLITIVIGLFALS), and 571 to 591 (PIISIIVVIAILYALTYFNLL).

The protein resides in the membrane. This is an uncharacterized protein from Mycoplasma (Bacteriophage L2).